We begin with the raw amino-acid sequence, 292 residues long: Probable 2-(5''-triphosphoribosyl)-3'-dephosphocoenzyme-A synthase (292 aa).

The protein belongs to the CitG/MdcB family.

The catalysed reaction is 3'-dephospho-CoA + ATP = 2'-(5''-triphospho-alpha-D-ribosyl)-3'-dephospho-CoA + adenine. In Shigella flexneri serotype 5b (strain 8401), this protein is Probable 2-(5''-triphosphoribosyl)-3'-dephosphocoenzyme-A synthase.